A 497-amino-acid polypeptide reads, in one-letter code: Delayed-rectifier potassium channel regulatory subunit KCNS1 (497 aa).

The Cytoplasmic segment spans residues 1-186; sequence MVSEFPGPGS…LTMENPGYSL (186 aa). A helical membrane pass occupies residues 187 to 208; sequence PSKLFSCVSIGVVLASIAAMCI. At 209–239 the chain is on the extracellular side; that stretch reads HSLPEYQAREAAAAVAAVAAGRSAEEVRDDP. A helical transmembrane segment spans residues 240–262; it reads VLRRLEYFCIAWFSFEVSSRLLL. The Cytoplasmic segment spans residues 263 to 273; that stretch reads APSTRNFFCHP. The chain crosses the membrane as a helical span at residues 274 to 291; it reads LNLIDIVSVLPFYLTLLA. Residues 292-309 lie on the Extracellular side of the membrane; it reads GAALGDQRGASGEELGDL. Residues 310–330 form a helical; Voltage-sensor membrane-spanning segment; it reads GKVVQVFRLMRIFRVLKLARH. The Cytoplasmic portion of the chain corresponds to 331–345; it reads STGLRSLGATLKHSY. A helical transmembrane segment spans residues 346–367; it reads REVGILLLYLAVGVSVFSGVAY. Over 368-379 the chain is Extracellular; that stretch reads TAEEENEGFHTI. The segment at residues 380 to 391 is an intramembrane region (helical); sequence PACWWWGTVSMT. The short motif at 392 to 397 is the Selectivity filter element; the sequence is TVGYGD. An intramembrane segment occupies 392 to 399; the sequence is TVGYGDVV. Over 400-406 the chain is Extracellular; the sequence is PETVGGK. A helical membrane pass occupies residues 407–435; sequence LAASGCILGGILVVALPITIIFNKFSHFY. The Cytoplasmic portion of the chain corresponds to 436 to 497; it reads RRQKALEAAV…PREPAKSHSY (62 aa). The interval 464-497 is disordered; it reads SDVSLETSRDTSQEGRSTDLETQAPREPAKSHSY. Positions 470–482 are enriched in basic and acidic residues; the sequence is TSRDTSQEGRSTD.

It belongs to the potassium channel family. S (TC 1.A.1.2) subfamily. Kv9.1/KCNS1 sub-subfamily. In terms of assembly, heterotetramer with KCNB1 and KCNB2. Does not form homomultimers. As to expression, detected in brain, but not in the other tissues tested. The highest levels of expression are in olfactory bulb, cerebral cortex, hippocampus, habenula, basolateral amygdaloid nuclei and cerebellum.

The protein resides in the cell membrane. Functionally, potassium channel regulatory subunit that modulate the delayed rectifier voltage-gated potassium channel activity of KCNB1 and KCNB2 by altering their kinetics, expression levels, and shifting the half-inactivation potential to more polarized values. While it does not form functional channels on its own, it can form functional heterotetrameric channels with KCNB1 and KCNB2. Each regulatory subunit has unique regulatory properties that can lead to extensive inhibition, significant changes in kinetics, and/or substantial shifts in the voltage dependencies of the inactivation process. The polypeptide is Delayed-rectifier potassium channel regulatory subunit KCNS1 (Mus musculus (Mouse)).